Here is an 86-residue protein sequence, read N- to C-terminus: NAD(P)H-quinone oxidoreductase subunit O (86 aa).

The protein belongs to the complex I NdhO subunit family. In terms of assembly, NDH-1 can be composed of about 15 different subunits; different subcomplexes with different compositions have been identified which probably have different functions.

The protein localises to the cellular thylakoid membrane. It carries out the reaction a plastoquinone + NADH + (n+1) H(+)(in) = a plastoquinol + NAD(+) + n H(+)(out). The catalysed reaction is a plastoquinone + NADPH + (n+1) H(+)(in) = a plastoquinol + NADP(+) + n H(+)(out). Functionally, NDH-1 shuttles electrons from an unknown electron donor, via FMN and iron-sulfur (Fe-S) centers, to quinones in the respiratory and/or the photosynthetic chain. The immediate electron acceptor for the enzyme in this species is believed to be plastoquinone. Couples the redox reaction to proton translocation, and thus conserves the redox energy in a proton gradient. Cyanobacterial NDH-1 also plays a role in inorganic carbon-concentration. The polypeptide is NAD(P)H-quinone oxidoreductase subunit O (Prochlorococcus marinus (strain SARG / CCMP1375 / SS120)).